The following is a 405-amino-acid chain: Nicotinate phosphoribosyltransferase (405 aa).

H224 carries the post-translational modification Phosphohistidine; by autocatalysis.

This sequence belongs to the NAPRTase family. Transiently phosphorylated on a His residue during the reaction cycle. Phosphorylation strongly increases the affinity for substrates and increases the rate of nicotinate D-ribonucleotide production. Dephosphorylation regenerates the low-affinity form of the enzyme, leading to product release.

It catalyses the reaction nicotinate + 5-phospho-alpha-D-ribose 1-diphosphate + ATP + H2O = nicotinate beta-D-ribonucleotide + ADP + phosphate + diphosphate. Its pathway is cofactor biosynthesis; NAD(+) biosynthesis; nicotinate D-ribonucleotide from nicotinate: step 1/1. Functionally, catalyzes the synthesis of beta-nicotinate D-ribonucleotide from nicotinate and 5-phospho-D-ribose 1-phosphate at the expense of ATP. This chain is Nicotinate phosphoribosyltransferase, found in Methanococcoides burtonii (strain DSM 6242 / NBRC 107633 / OCM 468 / ACE-M).